Consider the following 37-residue polypeptide: Cytochrome b6-f complex subunit 5 (37 aa).

The chain crosses the membrane as a helical span at residues 5-25 (LLSGIVLGLIPITLLGLFVTA).

Belongs to the PetG family. In terms of assembly, the 4 large subunits of the cytochrome b6-f complex are cytochrome b6, subunit IV (17 kDa polypeptide, PetD), cytochrome f and the Rieske protein, while the 4 small subunits are PetG, PetL, PetM and PetN. The complex functions as a dimer.

It localises to the plastid. The protein resides in the chloroplast thylakoid membrane. Its function is as follows. Component of the cytochrome b6-f complex, which mediates electron transfer between photosystem II (PSII) and photosystem I (PSI), cyclic electron flow around PSI, and state transitions. PetG is required for either the stability or assembly of the cytochrome b6-f complex. This is Cytochrome b6-f complex subunit 5 from Marchantia polymorpha (Common liverwort).